A 91-amino-acid polypeptide reads, in one-letter code: Insertion element IS1 7 protein InsA (91 aa).

This sequence belongs to the IS1 elements InsA family.

In terms of biological role, absolutely required for transposition of IS1. The protein is Insertion element IS1 7 protein InsA (insA7) of Escherichia coli (strain K12).